The following is an 80-amino-acid chain: Large ribosomal subunit protein eL14 (80 aa).

It belongs to the eukaryotic ribosomal protein eL14 family.

In Methanocaldococcus jannaschii (strain ATCC 43067 / DSM 2661 / JAL-1 / JCM 10045 / NBRC 100440) (Methanococcus jannaschii), this protein is Large ribosomal subunit protein eL14.